Reading from the N-terminus, the 323-residue chain is Beta-ketoacyl-[acyl-carrier-protein] synthase III (323 aa).

Catalysis depends on residues Cys-113 and His-250. Residues 251 to 255 (QANKR) form an ACP-binding region. The active site involves Asn-280.

Belongs to the thiolase-like superfamily. FabH family. Homodimer.

It is found in the cytoplasm. The enzyme catalyses malonyl-[ACP] + acetyl-CoA + H(+) = 3-oxobutanoyl-[ACP] + CO2 + CoA. It participates in lipid metabolism; fatty acid biosynthesis. In terms of biological role, catalyzes the condensation reaction of fatty acid synthesis by the addition to an acyl acceptor of two carbons from malonyl-ACP. Catalyzes the first condensation reaction which initiates fatty acid synthesis and may therefore play a role in governing the total rate of fatty acid production. Possesses both acetoacetyl-ACP synthase and acetyl transacylase activities. Its substrate specificity determines the biosynthesis of branched-chain and/or straight-chain of fatty acids. This chain is Beta-ketoacyl-[acyl-carrier-protein] synthase III, found in Brucella abortus biovar 1 (strain 9-941).